A 72-amino-acid chain; its full sequence is ATP-dependent Clp protease ATP-binding subunit ClpA homolog (72 aa).

It belongs to the ClpA/ClpB family.

The protein resides in the plastid. It localises to the chloroplast. May interact with a ClpP-like protease involved in degradation of denatured proteins in the chloroplast. This chain is ATP-dependent Clp protease ATP-binding subunit ClpA homolog, found in Populus euphratica (Euphrates poplar).